A 143-amino-acid polypeptide reads, in one-letter code: Phosphatidylethanolamine-binding protein homolog R644 (143 aa).

The protein belongs to the phosphatidylethanolamine-binding protein family.

The protein localises to the virion. This is Phosphatidylethanolamine-binding protein homolog R644 from Acanthamoeba polyphaga mimivirus (APMV).